The chain runs to 448 residues: SET domain-containing protein SmydA-8, isoform B (448 aa).

Residues 42–273 (PSWRVADSPI…AGAEITMSYA (232 aa)) form the SET domain.

Belongs to the class V-like SAM-binding methyltransferase superfamily.

This Drosophila melanogaster (Fruit fly) protein is SET domain-containing protein SmydA-8, isoform B.